The chain runs to 129 residues: Protein Turandot A (129 aa).

Positions 1–21 are cleaved as a signal peptide; sequence MNSSTALMCFALLLISPLCMG. An N-linked (GlcNAc...) asparagine glycan is attached at asparagine 49.

The protein belongs to the Turandot family. As to expression, expressed in the fat body (at protein level).

It is found in the secreted. A humoral factor that plays a role in stress tolerance; gives increased resistance to the lethal effects of bacterial challenge and stress. Regulated by the JAK/STAT pathway and NF-KB-like Relish pathway in the fat body, upd3 in the hemocytes and Mekk1 in response to septic injury and consequent immune response. The chain is Protein Turandot A from Drosophila melanogaster (Fruit fly).